The sequence spans 93 residues: Protein BOLA2 (93 aa).

Cysteine 29 is subject to S-glutathionyl cysteine; transient; alternate. The tract at residues lysine 72–alanine 93 is disordered.

The protein belongs to the bolA/yrbA family. In terms of assembly, homodimer. Interacts in vitro with GRXS14, GRXS15, GRXS16 and GRXS17, but not with GRXC5. Interacts in vivo only with GRXS17. In terms of processing, can be either glutathionylated or forming covalent homodimers, depending on the oxidation state.

The protein resides in the cytoplasm. Its subcellular location is the nucleus. Its function is as follows. May act either alone or in interaction with glutaredoxin as a redox-regulated transcriptional regulator, or as a factor regulating Fe-S cluster biogenesis. The GRXS17-BOLA2 heterodimer binds a labile, oxygen sensitive iron-sulfur cluster. The protein is Protein BOLA2 of Arabidopsis thaliana (Mouse-ear cress).